The following is a 222-amino-acid chain: Large ribosomal subunit protein uL1 (222 aa).

Belongs to the universal ribosomal protein uL1 family. In terms of assembly, part of the 50S ribosomal subunit.

Its function is as follows. Binds directly to 23S rRNA. Probably involved in E site tRNA release. Functionally, protein L1 is also a translational repressor protein, it controls the translation of its operon by binding to its mRNA. This Pyrobaculum neutrophilum (strain DSM 2338 / JCM 9278 / NBRC 100436 / V24Sta) (Thermoproteus neutrophilus) protein is Large ribosomal subunit protein uL1.